Consider the following 566-residue polypeptide: Oxygen-dependent choline dehydrogenase (566 aa).

7–36 (DYIICGAGSAGNVLATRLTEDPDVTVLLLE) provides a ligand contact to FAD. A disordered region spans residues 180-202 (NGYQQEGFGPMDRTVTPKGRRAS). Histidine 474 serves as the catalytic Proton acceptor.

It belongs to the GMC oxidoreductase family. Requires FAD as cofactor.

It catalyses the reaction choline + A = betaine aldehyde + AH2. The catalysed reaction is betaine aldehyde + NAD(+) + H2O = glycine betaine + NADH + 2 H(+). It functions in the pathway amine and polyamine biosynthesis; betaine biosynthesis via choline pathway; betaine aldehyde from choline (cytochrome c reductase route): step 1/1. In terms of biological role, involved in the biosynthesis of the osmoprotectant glycine betaine. Catalyzes the oxidation of choline to betaine aldehyde and betaine aldehyde to glycine betaine at the same rate. The protein is Oxygen-dependent choline dehydrogenase of Burkholderia orbicola (strain MC0-3).